Here is a 485-residue protein sequence, read N- to C-terminus: RAC-beta serine/threonine-protein kinase B (485 aa).

The PH domain occupies 5–109 (MVIKEGWLQK…WIIAIQTVAN (105 aa)). Ser-132 and Ser-135 each carry an O-linked (GlcNAc) serine glycan. Positions 156 to 413 (FDYLKLLGKG…AQEVMSHGFF (258 aa)) constitute a Protein kinase domain. ATP is bound by residues 162–170 (LGKGTFGKV) and Lys-185. Catalysis depends on Asp-279, which acts as the Proton acceptor. O-linked (GlcNAc) threonine glycosylation occurs at Thr-310. Thr-313 is modified (phosphothreonine). O-linked (GlcNAc) threonine glycosylation is present at Thr-317. The region spanning 414-485 (ASINWQDVTE…QFSYSSSIRE (72 aa)) is the AGC-kinase C-terminal domain. The segment at 454–485 (LTPPDRYDNLDALESEQRPHFPQFSYSSSIRE) is disordered. Residues 458–472 (DRYDNLDALESEQRP) show a composition bias toward basic and acidic residues. Phosphoserine is present on Ser-478. Ser-478 carries O-linked (GlcNAc) serine; alternate glycosylation.

The protein belongs to the protein kinase superfamily. AGC Ser/Thr protein kinase family. RAC subfamily. Phosphorylation on Thr-313 and Ser-478 is required for full activity. Phosphorylation of the activation loop at Thr-313 by PDPK1/PDK1 is a prerequisite for full activation. Phosphorylation by mTORC2 at Ser-478 in response to growth factors plays a key role in AKT1 activation by facilitating subsequent phosphorylation of the activation loop by PDPK1/PDK1.

It catalyses the reaction L-seryl-[protein] + ATP = O-phospho-L-seryl-[protein] + ADP + H(+). It carries out the reaction L-threonyl-[protein] + ATP = O-phospho-L-threonyl-[protein] + ADP + H(+). Its activity is regulated as follows. Two specific sites, one in the kinase domain (Thr-313) and the other in the C-terminal regulatory region (Ser-478), need to be phosphorylated for its full activation. In terms of biological role, akt2-b is one of several closely related serine/threonine-protein kinases known as the AKT kinase, and which regulate many processes including metabolism, proliferation, cell survival, growth and angiogenesis. This is mediated through serine and/or threonine phosphorylation of a range of downstream substrates. Over 100 substrate candidates have been reported so far, but for most of them, no isoform specificity has been reported. May be involved in the inhibition of ciliogenesis. This chain is RAC-beta serine/threonine-protein kinase B (akt2-b), found in Xenopus laevis (African clawed frog).